The following is a 602-amino-acid chain: ATP-dependent lipid A-core flippase (602 aa).

Transmembrane regions (helical) follow at residues 28–48 (VGIF…QPML), 84–104 (LLII…NYFL), 158–178 (IKVV…LLWM), 180–200 (WHLT…VSIA), and 268–288 (PMLQ…VLFL). An ABC transmembrane type-1 domain is found at 32 to 323 (LLSIVGFVIF…LSEVSSTIQK (292 aa)). An ABC transporter domain is found at 355–591 (LEVRNLSFTY…NGHYARLHAM (237 aa)). Residue 389–396 (GRSGSGKS) participates in ATP binding.

This sequence belongs to the ABC transporter superfamily. Lipid exporter (TC 3.A.1.106) family. Homodimer.

It is found in the cell inner membrane. The catalysed reaction is ATP + H2O + lipid A-core oligosaccharideSide 1 = ADP + phosphate + lipid A-core oligosaccharideSide 2.. Its function is as follows. Involved in lipopolysaccharide (LPS) biosynthesis. Translocates lipid A-core from the inner to the outer leaflet of the inner membrane. Transmembrane domains (TMD) form a pore in the inner membrane and the ATP-binding domain (NBD) is responsible for energy generation. This Pseudomonas putida (strain ATCC 47054 / DSM 6125 / CFBP 8728 / NCIMB 11950 / KT2440) protein is ATP-dependent lipid A-core flippase.